The chain runs to 557 residues: MNPQANDRKEFQGDCSATGDLTAKHDSAGGNGGGGARYKLMSPAKLPISRSTDITIPPGLSPTSFLESPVFISNIKPEPSPTTGSLFKPRPVHISASSSSYTGRGFHQNTFTEQKSSEFEFRPPASNMVYAELGKIRSEPPVHFQGQGHGSSHSPSSISDAAGSSSELSRPTPPCQMTPTSSDIPAGSDQEESIQTSQNDSRGSTPSILADDGYNWRKYGQKHVKGSEFPRSYYKCTHPNCEVKKLFERSHDGQITDIIYKGTHDHPKPQPGRRNSGGMAAQEERLDKYPSSTGRDEKGSGVYNLSNPNEQTGNPEVPPISASDDGGEAAASNRNKDEPDDDDPFSKRRRMEGAMEITPLVKPIREPRVVVQTLSEVDILDDGYRWRKYGQKVVRGNPNPRSYYKCTAHGCPVRKHVERASHDPKAVITTYEGKHDHDVPTSKSSSNHEIQPRFRPDETDTISLNLGVGISSDGPNHASNEHQHQNQQLVNQTHPNGVNFRFVHASPMSSYYASLNSGMNQYGQRETKNETQNGDISSLNNSSYPYPPNMGRVQSGP.

Residues 1 to 12 show a composition bias toward basic and acidic residues; that stretch reads MNPQANDRKEFQ. Disordered regions lie at residues 1–36 and 76–215; these read MNPQ…GGGA and KPEP…DGYN. Positions 95-114 are enriched in polar residues; sequence SASSSSYTGRGFHQNTFTEQ. Low complexity predominate over residues 151 to 169; the sequence is SSHSPSSISDAAGSSSELS. Polar residues predominate over residues 193-207; sequence SIQTSQNDSRGSTPS. Positions 205–269 form a DNA-binding region, WRKY 1; sequence TPSILADDGY…YKGTHDHPKP (65 aa). Residues cysteine 236, cysteine 241, histidine 264, and histidine 266 each coordinate Zn(2+). Residues 257 to 348 are disordered; the sequence is DIIYKGTHDH…PDDDDPFSKR (92 aa). Residues 282 to 299 are compositionally biased toward basic and acidic residues; the sequence is QEERLDKYPSSTGRDEKG. Over residues 303 to 314 the composition is skewed to polar residues; it reads YNLSNPNEQTGN. Residues 321-332 show a composition bias toward low complexity; the sequence is SASDDGGEAAAS. A DNA-binding region (WRKY 2) is located at residues 375-440; that stretch reads SEVDILDDGY…YEGKHDHDVP (66 aa). The Zn(2+) site is built by cysteine 406, cysteine 411, histidine 435, and histidine 437. 2 disordered regions span residues 433-486 and 520-557; these read GKHD…QHQN and NQYG…QSGP. Residues 520–536 are compositionally biased toward polar residues; that stretch reads NQYGQRETKNETQNGDI.

The protein belongs to the WRKY group I family.

The protein localises to the nucleus. Its function is as follows. Transcription factor. Interacts specifically with the W box (5'-(T)TGAC[CT]-3'), a frequently occurring elicitor-responsive cis-acting element. The protein is Probable WRKY transcription factor 20 (WRKY20) of Arabidopsis thaliana (Mouse-ear cress).